Consider the following 202-residue polypeptide: Putative zinc finger protein ZK686.5 (202 aa).

The disordered stretch occupies residues 43–63; it reads RKNVDNTSTRKPYSYKDRKRK. C2H2-type zinc fingers lie at residues 110-133, 138-160, and 169-192; these read TYCE…GKVH, IECH…MKTH, and VQCE…DVSH.

It localises to the nucleus. This Caenorhabditis elegans protein is Putative zinc finger protein ZK686.5.